The following is a 338-amino-acid chain: Lipoate-protein ligase A (338 aa).

Residues 29 to 216 (PATQRVLFLW…AFFAHYGERV (188 aa)) form the BPL/LPL catalytic domain. ATP contacts are provided by residues Arg-71, 76-79 (GAVF), and Lys-134. (R)-lipoate is bound at residue Lys-134.

The protein belongs to the LplA family. In terms of assembly, monomer.

The protein localises to the cytoplasm. The catalysed reaction is L-lysyl-[lipoyl-carrier protein] + (R)-lipoate + ATP = N(6)-[(R)-lipoyl]-L-lysyl-[lipoyl-carrier protein] + AMP + diphosphate + H(+). It participates in protein modification; protein lipoylation via exogenous pathway; protein N(6)-(lipoyl)lysine from lipoate: step 1/2. It functions in the pathway protein modification; protein lipoylation via exogenous pathway; protein N(6)-(lipoyl)lysine from lipoate: step 2/2. Catalyzes both the ATP-dependent activation of exogenously supplied lipoate to lipoyl-AMP and the transfer of the activated lipoyl onto the lipoyl domains of lipoate-dependent enzymes. This is Lipoate-protein ligase A from Salmonella agona (strain SL483).